The chain runs to 1382 residues: MSIEDYLKGKNCLASPNYDPDDQHSSWREDLPQFKKDREHLTLVNTRRNRTYNTKLNRFDPEYWVVDYNALMVATIIPYGSKSFKVPCQWRTNKDFLGVRWMTEDTFDHHLYRYETDPNYLGLILAFRHNPDEPDKFTVTIQTPEKAYTYRLAPYGFNNKTRRWECLDTKYGTKRTYQADIFVATDEDIPESEMTEVYGTKDYIFILDFADLRTGVAFNGVTINPRNITMISFDCTEAHHGLGKDAYIAAMYNNDDGATFQMEIGGIHTNAALAAGDKLQCIWRYLDVNGNAQAAENEFEVVSYEGFGTSNFSVKCKGMLPGKFIGCDAFYGKYLQTDGPIKQVDSVKWFTNLTVSGSGRKQLGQRKYPQVVMGMGMTSGFDDGYNLTPERQVKMAYGLGYRDWWTTYIGMSHYWKGLTAFQDKETGELITEQTVLDYPILFAGESQVAIHFMSGAYPDRGYDVFQKYMTETWGINYAGVHPINGTTGSTAVDRACAVNPNSEVFDPTQSSGAGGLWWWDLEADKPGPALLHCVGQVGKLKPKAIIWGQGDQDATALAYPGDRNPAPSLTRTKQATKKVFEYLRSLYGQIPIFIQELSYAWGITNTDAPNVPIRTGLPSFLAARRNTWGDIEFRWKSYGLDPALAQYRIEIYNPSNLNQILHSFVVSGTQEANGYVYADFTVEDWIPVMMEAVGSPNPWEFMKWRVVCLYQEREIPSAPWSDNIPLDNAGLVKKTILVGINQFGGGHFTDMSDPTATTANGAIGRKDKVSASTLRLTFAEKAGLRPIQVMPVNVAADSAGMTVGTHKWWNTSSNSPGDALLAINDMVKGLGVKPDYFIEANPWETMYMKDVNSSTWPALMTAFESSNKAMLAWMRTNWGNPNLEIWFQGATTVWFGVAPPNDLNSEATVTVRDKQIQMATANIGFKLGSFVPGSNLYTAYRNVESSWIYYTVEAFHATAIELGEALALNINRATNPPDWSYLRPPANLQGRKLATRDIKMTWDNRAGITHWKYANRHVTTGAEISSGILTSPEYVFTLNDQQNAYNGDTLNMSFSVSEYAADSGAVGASSSFVGVVQNGSYMQTPTQLKAAKQLNGDIIFTWVGRPSWQHFWVVNTSVNDSKTVIFSKEWSSESLTWTVAEQNEFYGLEEGGATHVIFMVSEYDPSNGLVSIGAQVTGQAEQPSNPMNPVAGLYAVFTGDPGNSNIKIMWDKPSVGGRDVRIRNMHVTSSATISDQFVSDNNLVFTREEQVAAYGFTASSVSVRAQEHDIESGALGLTTEYVAVPETAGTVGQGFAKKDSVGNCTMSWEVGDAVQWQVEILNAENSTVVKTEIVVAPTITWMAEEITAEYGYLTDHMVWRVRPYRADGASNVAKQFDMTATL.

In terms of assembly, interacts with host NfrA receptor; this interaction is essential for viral adsorption to the host.

The protein localises to the virion. Assembles to form the non-contractile sheath that surrounds the tail tube. Allows viral attachment to the host by binding the bacterial outer membrane protein NfrA. The chain is Non-contractile tail sheath (65) from Enterobacteria phage N4 (Bacteriophage N4).